The chain runs to 388 residues: tRNA(Ile)-lysidine synthase (388 aa).

An ATP-binding site is contributed by 51–56 (SGGRDS).

The protein belongs to the tRNA(Ile)-lysidine synthase family.

The protein localises to the cytoplasm. The catalysed reaction is cytidine(34) in tRNA(Ile2) + L-lysine + ATP = lysidine(34) in tRNA(Ile2) + AMP + diphosphate + H(+). Its function is as follows. Ligates lysine onto the cytidine present at position 34 of the AUA codon-specific tRNA(Ile) that contains the anticodon CAU, in an ATP-dependent manner. Cytidine is converted to lysidine, thus changing the amino acid specificity of the tRNA from methionine to isoleucine. The polypeptide is tRNA(Ile)-lysidine synthase (Bifidobacterium longum (strain NCC 2705)).